Here is a 307-residue protein sequence, read N- to C-terminus: Small ribosomal subunit biogenesis GTPase RsgA (307 aa).

The disordered stretch occupies residues 1 to 21 (MPSEHPFSDGIPTPNPKETMN). The 158-residue stretch at 85 to 242 (RQDAWKTKLI…LIDSPGLQEF (158 aa)) folds into the CP-type G domain. GTP contacts are provided by residues 135 to 138 (NKAD) and 184 to 192 (GQSGMGKST). Residues C266, C271, H273, and C279 each coordinate Zn(2+).

The protein belongs to the TRAFAC class YlqF/YawG GTPase family. RsgA subfamily. Monomer. Associates with 30S ribosomal subunit, binds 16S rRNA. It depends on Zn(2+) as a cofactor.

The protein localises to the cytoplasm. In terms of biological role, one of several proteins that assist in the late maturation steps of the functional core of the 30S ribosomal subunit. Helps release RbfA from mature subunits. May play a role in the assembly of ribosomal proteins into the subunit. Circularly permuted GTPase that catalyzes slow GTP hydrolysis, GTPase activity is stimulated by the 30S ribosomal subunit. This chain is Small ribosomal subunit biogenesis GTPase RsgA, found in Neisseria meningitidis serogroup B (strain ATCC BAA-335 / MC58).